A 351-amino-acid polypeptide reads, in one-letter code: Tropomodulin-2 (351 aa).

Residue Ser25 is modified to Phosphoserine.

The protein belongs to the tropomodulin family. As to quaternary structure, binds to the N-terminus of tropomyosin and to actin. Binds to TMBr3 as well as to other low molecular mass tropomyosins (TM5a or TM5), but not to high molecular mass tropomyosins (TM2 or TMBr1). As to expression, neuronal-tissue specific.

The protein localises to the cytoplasm. Its subcellular location is the cytoskeleton. Functionally, blocks the elongation and depolymerization of the actin filaments at the pointed end. The Tmod/TM complex contributes to the formation of the short actin protofilament, which in turn defines the geometry of the membrane skeleton. The sequence is that of Tropomodulin-2 (Tmod2) from Rattus norvegicus (Rat).